Reading from the N-terminus, the 366-residue chain is 2-aminoethylphosphonate--pyruvate transaminase (366 aa).

Lys194 is subject to N6-(pyridoxal phosphate)lysine.

The protein belongs to the class-V pyridoxal-phosphate-dependent aminotransferase family. PhnW subfamily. As to quaternary structure, homodimer. Pyridoxal 5'-phosphate is required as a cofactor.

The enzyme catalyses (2-aminoethyl)phosphonate + pyruvate = phosphonoacetaldehyde + L-alanine. Involved in phosphonate degradation. In Lactiplantibacillus plantarum (strain ATCC BAA-793 / NCIMB 8826 / WCFS1) (Lactobacillus plantarum), this protein is 2-aminoethylphosphonate--pyruvate transaminase.